Consider the following 235-residue polypeptide: Sperm annulus positionning complex subunit Chibby3 (235 aa).

Residues 1–41 are disordered; the sequence is MADSKMKWGQAWDSSLGTATTSSSSATGSPSPFQNIRVPDT. Low complexity predominate over residues 14–32; that stretch reads SSLGTATTSSSSATGSPSP. Residues 167-181 form a leucine-zipper; mediates homodimerization region; the sequence is LLEENNYLKLQQELL.

The protein belongs to the chibby family. Homodimer. Interacts with CIBAR1 (via BAR-like domain); both proteins form a ninefold symmetric structure at the flagellar base; are recruited to the annulus in a mutually dependent manner and regulate annulus positionning. As to expression, testis-specific.

The protein resides in the cell projection. It is found in the cilium. The protein localises to the flagellum. Plays a key role in the correct positioning of the annulus, a septin-based ring strucure in the sperm flagellum, serving both as a physical barrier and a membrane diffusion barrier that separates the midpiece (MP) from the principal piece (PP). This positioning is essential for proper sperm motility and function. Interacts with CIBAR1 to form a complex which localizes to the curved membrane region of the flagellar pocket. By doing so, may provide stability and rigidity to the periannular membrane to prevent membrane deformation. This function is crucial for halting annulus migration at the proximal end of the fibrous sheath-containing PP. In Mus musculus (Mouse), this protein is Sperm annulus positionning complex subunit Chibby3 (Cby3).